The chain runs to 1186 residues: Trafficking protein particle complex II-specific subunit 120 homolog (1186 aa).

Disordered regions lie at residues 777–824 and 964–984; these read PTDS…EKES and TKDP…SEKN. Polar residues predominate over residues 779–792; sequence DSDNTMSSGRNAAG. Serine 971 bears the Phosphoserine mark. The segment covering 972-981 has biased composition (low complexity); that stretch reads PSSSRNPSFS.

Belongs to the TRS120 family. Part of the multisubunit TRAPP (transport protein particle) II complex composed of BET3, BET5, TRS20, TRS23, TRS31, TRS33, TRS65, TRS85, TRS120 and TRS130. As to expression, expressed in roots, leaves, stems and flowers.

It is found in the golgi apparatus. Its subcellular location is the trans-Golgi network. The protein resides in the early endosome. Its function is as follows. Specific subunit of the TRAPP II complex, a highly conserved vesicle tethering complex that is required for the proper transport of proteins in post-Golgi trafficking pathways to the growing cell plate in mitotic active cells. Required for the polarized and selective transport of PIN2 and probably PIN1 to the plasma membrane. Not required for ER-to-Golgi as well as biosynthetic and endocytic vacuolar transport. The polypeptide is Trafficking protein particle complex II-specific subunit 120 homolog (Arabidopsis thaliana (Mouse-ear cress)).